Consider the following 332-residue polypeptide: RNA polymerase principal sigma factor HrdD (332 aa).

The interval 1–25 (MATRAVARRQSATGETADSASSVRA) is disordered. Residues 10-22 (QSATGETADSASS) are compositionally biased toward polar residues. Positions 124-137 (DLIQEGNAGLVRAV) match the Polymerase core binding motif. A DNA-binding region (H-T-H motif) is located at residues 294–313 (LTEVGKEHGLTRERIRQIEK).

It belongs to the sigma-70 factor family.

Functionally, sigma factors are initiation factors that promote the attachment of RNA polymerase to specific initiation sites and are then released. The chain is RNA polymerase principal sigma factor HrdD (hrdD) from Streptomyces viridifaciens.